The sequence spans 341 residues: Dihydroorotate dehydrogenase (quinone) (341 aa).

FMN contacts are provided by residues 61–65 and Thr-85; that span reads AGLDK. Lys-65 is a binding site for substrate. A substrate-binding site is contributed by 110-114; it reads NRMGF. 2 residues coordinate FMN: Asn-138 and Asn-171. Asn-171 serves as a coordination point for substrate. The Nucleophile role is filled by Ser-174. Asn-176 serves as a coordination point for substrate. FMN contacts are provided by Lys-216 and Thr-244. 245–246 lines the substrate pocket; sequence NT. Residues Gly-267, Gly-296, and 317–318 contribute to the FMN site; that span reads YS.

This sequence belongs to the dihydroorotate dehydrogenase family. Type 2 subfamily. Monomer. FMN is required as a cofactor.

It is found in the cell membrane. It carries out the reaction (S)-dihydroorotate + a quinone = orotate + a quinol. Its pathway is pyrimidine metabolism; UMP biosynthesis via de novo pathway; orotate from (S)-dihydroorotate (quinone route): step 1/1. Catalyzes the conversion of dihydroorotate to orotate with quinone as electron acceptor. In Pseudomonas putida (strain W619), this protein is Dihydroorotate dehydrogenase (quinone).